The sequence spans 614 residues: Allergen Ara h 1, clone P17 (614 aa).

Positions 1–25 (MRGRVSPLMLLLGILVLASVSATQA) are cleaved as a signal peptide. Disordered stretches follow at residues 72-177 (DTGA…RRFS), 334-356 (NAGGEQEERGQRRRSTRSSDNEG), 372-397 (HAKSVSKKGSEEEDITNPINLRDGEP), and 464-491 (KEQQQRGRREQEWEEEEEDEEEEGSNRE). Over residues 81–132 (PPGERTRGRQPGDYDDDRRQPRREEGGRWGPAEPREREREEDWRQPREDWRR) the composition is skewed to basic and acidic residues. The Cupin type-1 1 domain occupies 169-327 (FYFPSRRFST…AFNAEFNEIR (159 aa)). A Cupin type-1 2 domain is found at 390–566 (INLRDGEPDL…AFPGSGEQVE (177 aa)). Basic and acidic residues predominate over residues 464–474 (KEQQQRGRREQ). Over residues 475–486 (EWEEEEEDEEEE) the composition is skewed to acidic residues. Asn516 carries N-linked (GlcNAc...) asparagine glycosylation. The tract at residues 572-614 (QRESHFVSARPQSQSPSSPEKEDQEEENQGGKGPLLSILKAFN) is disordered.

It belongs to the 7S seed storage protein family.

The chain is Allergen Ara h 1, clone P17 from Arachis hypogaea (Peanut).